The sequence spans 155 residues: Small ribosomal subunit protein bS16 (155 aa).

The tract at residues 113-155 (ADGAPTGEAIQQKKKKAPKKAEAAEAEAPAEEPAAESADAASE) is disordered. Positions 136–146 (AEAEAPAEEPA) are enriched in acidic residues.

This sequence belongs to the bacterial ribosomal protein bS16 family.

The protein is Small ribosomal subunit protein bS16 of Mycobacteroides abscessus (strain ATCC 19977 / DSM 44196 / CCUG 20993 / CIP 104536 / JCM 13569 / NCTC 13031 / TMC 1543 / L948) (Mycobacterium abscessus).